We begin with the raw amino-acid sequence, 573 residues long: Sulfite oxidase, mitochondrial (573 aa).

A mitochondrion-targeting transit peptide spans 1–34 (MRLLRPSWAGLLRGRHHQHQRHHRRLLLTTSRGS). The segment covering 14–26 (GRHHQHQRHHRRL) has biased composition (basic residues). Residues 14 to 50 (GRHHQHQRHHRRLLLTTSRGSNGEREEQQHSQWSSPG) form a disordered region. Residues 108–186 (LPTYRAEEVE…LEGFRIGNLE (79 aa)) enclose the Cytochrome b5 heme-binding domain. Heme b contacts are provided by His144 and His168. The hinge stretch occupies residues 190 to 199 (VTNVDDELGS). The segment at 200–423 (PWSQEPQRHA…DSHWQQNDYK (224 aa)) is moco domain. Mo-molybdopterin is bound by residues 240 to 244 (YVRNH), Cys287, Asp344, His383, Arg388, and 399 to 401 (NVK). A homodimerization region spans residues 424–567 (GFSPSTDWDT…RGVLANAYHK (144 aa)).

It depends on heme b as a cofactor. Requires Mo-molybdopterin as cofactor. Expressed in the ensheathing glia with relatively weak expression in the CNS cortex (at protein level).

Its subcellular location is the mitochondrion intermembrane space. The catalysed reaction is sulfite + O2 + H2O = sulfate + H2O2. Its pathway is energy metabolism; sulfur metabolism. In terms of biological role, required in ensheathing glial cells for normal larval locomotion. Oxidizes sulfite which is required to maintain glutamate homeostasis and as a consequence, neuronal network function. The sequence is that of Sulfite oxidase, mitochondrial from Drosophila melanogaster (Fruit fly).